Consider the following 438-residue polypeptide: uncharacterized protein (438 aa).

The N-terminal stretch at 1-20 is a signal peptide; sequence MNTRLALVLCAVGSGVLSFS. C21 carries N-palmitoyl cysteine lipidation. Residue C21 is the site of S-diacylglycerol cysteine attachment.

The protein resides in the cell membrane. This is an uncharacterized protein from Treponema pallidum (strain Nichols).